The chain runs to 345 residues: Anthranilate phosphoribosyltransferase (345 aa).

Residues G84, 87-88, T92, 94-97, 112-120, and S124 contribute to the 5-phospho-alpha-D-ribose 1-diphosphate site; these read GD, NIST, and KHGGRSVSS. Residue G84 participates in anthranilate binding. S96 contributes to the Mg(2+) binding site. Anthranilate is bound at residue R170. 2 residues coordinate Mg(2+): D229 and E230.

Belongs to the anthranilate phosphoribosyltransferase family. In terms of assembly, homodimer. Mg(2+) serves as cofactor.

The enzyme catalyses N-(5-phospho-beta-D-ribosyl)anthranilate + diphosphate = 5-phospho-alpha-D-ribose 1-diphosphate + anthranilate. Its pathway is amino-acid biosynthesis; L-tryptophan biosynthesis; L-tryptophan from chorismate: step 2/5. Its function is as follows. Catalyzes the transfer of the phosphoribosyl group of 5-phosphorylribose-1-pyrophosphate (PRPP) to anthranilate to yield N-(5'-phosphoribosyl)-anthranilate (PRA). This Herminiimonas arsenicoxydans protein is Anthranilate phosphoribosyltransferase.